Here is a 363-residue protein sequence, read N- to C-terminus: Spermidine/putrescine import ATP-binding protein PotA (363 aa).

The ABC transporter domain maps to 4–234 (LEIRNVTRRF…PRNHFVADFI (231 aa)). ATP is bound at residue 36 to 43 (GPSGCGKT).

Belongs to the ABC transporter superfamily. Spermidine/putrescine importer (TC 3.A.1.11.1) family. As to quaternary structure, the complex is composed of two ATP-binding proteins (PotA), two transmembrane proteins (PotB and PotC) and a solute-binding protein (PotD).

It is found in the cell inner membrane. It catalyses the reaction ATP + H2O + polyamine-[polyamine-binding protein]Side 1 = ADP + phosphate + polyamineSide 2 + [polyamine-binding protein]Side 1.. In terms of biological role, part of the ABC transporter complex PotABCD involved in spermidine/putrescine import. Responsible for energy coupling to the transport system. This is Spermidine/putrescine import ATP-binding protein PotA from Nitrosospira multiformis (strain ATCC 25196 / NCIMB 11849 / C 71).